The primary structure comprises 319 residues: 1-aminocyclopropane-1-carboxylate oxidase (319 aa).

The region spanning Gly-152 to Pro-253 is the Fe2OG dioxygenase domain. His-177, Asp-179, and His-234 together coordinate Fe cation.

Belongs to the iron/ascorbate-dependent oxidoreductase family. Requires Fe cation as cofactor.

The catalysed reaction is 1-aminocyclopropane-1-carboxylate + L-ascorbate + O2 = ethene + L-dehydroascorbate + hydrogen cyanide + CO2 + 2 H2O. Its pathway is alkene biosynthesis; ethylene biosynthesis via S-adenosyl-L-methionine; ethylene from S-adenosyl-L-methionine: step 2/2. This chain is 1-aminocyclopropane-1-carboxylate oxidase (ACO), found in Nicotiana tabacum (Common tobacco).